Here is a 61-residue protein sequence, read N- to C-terminus: [Val1,Thr6]-bradykinyl-Val,Asp (61 aa).

A signal peptide spans 1–22 (MAFLKKSLFLVLFLGVVSLSFC). Residues 23-48 (EEEEREEHEEEKREAEAAESAENLIS) constitute a propeptide that is removed on maturation. The interval 27–61 (REEHEEEKREAEAAESAENLISKRVPPGFTPFRVD) is disordered.

As to expression, expressed by the skin glands. Expression levels in inguinal glands and granular glands are virtually the same.

The protein localises to the secreted. Functionally, induces contraction of rat ileum smooth muscle (EC(50)=2.73 uM) but has no activity towards rat smooth muscle from tail artery, urinary bladder or uterus. Binds to both bradykinin receptor B1 (BDKRB1) and B2 (BDKRB2); the effect via BDKRB1 is stronger. The protein is [Val1,Thr6]-bradykinyl-Val,Asp of Physalaemus nattereri (Cuyaba dwarf frog).